Here is a 41-residue protein sequence, read N- to C-terminus: Large ribosomal subunit protein bL36 (41 aa).

This sequence belongs to the bacterial ribosomal protein bL36 family.

This chain is Large ribosomal subunit protein bL36, found in Bartonella tribocorum (strain CIP 105476 / IBS 506).